Consider the following 299-residue polypeptide: Coenzyme PQQ synthesis protein B (299 aa).

The protein belongs to the PqqB family.

It participates in cofactor biosynthesis; pyrroloquinoline quinone biosynthesis. In terms of biological role, may be involved in the transport of PQQ or its precursor to the periplasm. This Xanthomonas oryzae pv. oryzae (strain MAFF 311018) protein is Coenzyme PQQ synthesis protein B.